Consider the following 409-residue polypeptide: Threonine dehydratase-like protein AKTS1-1 (409 aa).

The segment at 1–21 is disordered; that stretch reads MADYLRQVMPENDSDSEALPR. K111 is modified (N6-(pyridoxal phosphate)lysine). Residues N138, 239–243, and S368 contribute to the pyridoxal 5'-phosphate site; that span reads GEGSL.

The protein belongs to the serine/threonine dehydratase family. Pyridoxal 5'-phosphate is required as a cofactor.

It functions in the pathway mycotoxin biosynthesis. Functionally, threonine dehydratase-like protein; part of the gene clusters that mediate the biosynthesis of the host-selective toxins (HSTs) AK-toxins responsible for Japanese pear black spot disease by the Japanese pear pathotype. AK-toxins are esters of 9,10-epoxy 8-hydroxy 9-methyldecatrienoic acid (EDA). On cellular level, AK-toxins affect plasma membrane of susceptible cells and cause a sudden increase in loss of K(+) after a few minutes of toxin treatment. The acyl-CoA ligase AKT1, the hydrolase AKT2 and enoyl-CoA hydratase AKT3 are all involved in the biosynthesis of the AK-, AF- and ACT-toxin common 9,10-epoxy-8-hydroxy-9-methyl-decatrienoic acid (EDA) structural moiety. Part of the EDA biosynthesis occurs in the peroxisome since these 3 enzymes are localized in peroxisomes. The exact roles of the 3 enzymes, as well as of additional AK-toxin clusters enzymes, including AKT4, AKT6 and AKTS1, have still to be elucidated. The Cytochrome P450 monooxygenase AKT7 on the other side functions to limit production of EDA and AK-toxin, probably via the catalysis of a side reaction of EDA or its precursor. This is Threonine dehydratase-like protein AKTS1-1 from Alternaria alternata (Alternaria rot fungus).